The chain runs to 378 residues: Valine--tRNA ligase (378 aa).

The stretch at 307-377 forms a coiled coil; that stretch reads AGFINKEAEL…IQEQYKAIEA (71 aa).

It belongs to the class-I aminoacyl-tRNA synthetase family. ValS type 1 subfamily. Monomer.

It is found in the cytoplasm. It carries out the reaction tRNA(Val) + L-valine + ATP = L-valyl-tRNA(Val) + AMP + diphosphate. In terms of biological role, catalyzes the attachment of valine to tRNA(Val). As ValRS can inadvertently accommodate and process structurally similar amino acids such as threonine, to avoid such errors, it has a 'posttransfer' editing activity that hydrolyzes mischarged Thr-tRNA(Val) in a tRNA-dependent manner. This is Valine--tRNA ligase (valS) from Haemophilus parainfluenzae.